Reading from the N-terminus, the 601-residue chain is Putative purine permease C1399.01c (601 aa).

12 helical membrane passes run 64-84 (VPVLLALLLGFQHALAMVGGV), 102-122 (TNYLVSAGLISSGIMTLIQIA), 131-151 (YYIGTGMLSVLGISFTSVSVA), 179-199 (YGAFLATACVCSLLEIFMSFI), 207-227 (LFPPIVTGPVVLLIGTSLISS), 264-284 (GWGSAQFIGLGFSVFATIIII), 294-314 (TTSVVLGLVVGMIISAATGYW), 337-357 (IYGPAVLPMLALYIVNMMEAI), 424-444 (FFCAVILFFMGLFAKFAAVFV), 450-470 (VLGGMTTFLFSSVAVSGIAII), 481-501 (FILTASMTLGMGAILVPDWFT), and 522-542 (LVMENGFAIGAFISIFLNLIL).

Belongs to the nucleobase:cation symporter-2 (NCS2) (TC 2.A.40) family.

It localises to the vacuole membrane. The polypeptide is Putative purine permease C1399.01c (Schizosaccharomyces pombe (strain 972 / ATCC 24843) (Fission yeast)).